A 1069-amino-acid polypeptide reads, in one-letter code: Protogenin B (1069 aa).

Residues M1 to G26 form the signal peptide. The Extracellular portion of the chain corresponds to F27–S936. 4 Ig-like domains span residues L30–T117, L122–V208, P221–T308, and P312–I396. 2 cysteine pairs are disulfide-bonded: C51-C100 and C143-C191. Residues N81, N88, N180, and N229 are each glycosylated (N-linked (GlcNAc...) asparagine). C242 and C290 are oxidised to a cystine. 2 N-linked (GlcNAc...) asparagine glycosylation sites follow: N299 and N306. The disordered stretch occupies residues K317 to E336. Residues C333 and C380 are joined by a disulfide bond. 5 consecutive Fibronectin type-III domains span residues A406 to D500, P502 to T601, P608 to T701, P711 to E804, and P809 to K904. N-linked (GlcNAc...) asparagine glycans are attached at residues N458, N473, and N560. Residues P590–T605 are compositionally biased toward polar residues. A disordered region spans residues P590–A609. Residues N618, N720, and N834 are each glycosylated (N-linked (GlcNAc...) asparagine). Residues G937–L957 form a helical membrane-spanning segment. Over S958–A1069 the chain is Cytoplasmic.

The protein belongs to the immunoglobulin superfamily. DCC family. As to expression, initially expressed in the ventral forebrain and ventral spinal cord. Later, also expressed in the midbrain and in parts of the diencephalon and hindbrain.

It is found in the membrane. May play a role in anteroposterior axis elongation. In Danio rerio (Zebrafish), this protein is Protogenin B.